The chain runs to 488 residues: Glutamyl-tRNA(Gln) amidotransferase subunit A (488 aa).

Residues lysine 77 and serine 152 each act as charge relay system in the active site. Catalysis depends on serine 176, which acts as the Acyl-ester intermediate.

This sequence belongs to the amidase family. GatA subfamily. In terms of assembly, heterotrimer of A, B and C subunits.

It catalyses the reaction L-glutamyl-tRNA(Gln) + L-glutamine + ATP + H2O = L-glutaminyl-tRNA(Gln) + L-glutamate + ADP + phosphate + H(+). In terms of biological role, allows the formation of correctly charged Gln-tRNA(Gln) through the transamidation of misacylated Glu-tRNA(Gln) in organisms which lack glutaminyl-tRNA synthetase. The reaction takes place in the presence of glutamine and ATP through an activated gamma-phospho-Glu-tRNA(Gln). The sequence is that of Glutamyl-tRNA(Gln) amidotransferase subunit A from Streptococcus pyogenes serotype M18 (strain MGAS8232).